The sequence spans 131 residues: Snaclec A8 (131 aa).

3 disulfides stabilise this stretch: C2-C13, C30-C129, and C104-C121. Residues 9 to 130 (HEGHCYKVFN…CGQPYRFTCE (122 aa)) enclose the C-type lectin domain.

This sequence belongs to the snaclec family. Heterodimer; disulfide-linked. Expressed by the venom gland.

Its subcellular location is the secreted. Its function is as follows. Interferes with one step of hemostasis (modulation of platelet aggregation, or coagulation cascade, for example). This is Snaclec A8 from Macrovipera lebetinus (Levantine viper).